The following is a 320-amino-acid chain: Cytochrome f (320 aa).

A signal peptide spans 1–35; sequence MQNRNTFSWVKEQMTRSIFVSMMIYIITRASISNA. Positions 36, 56, 59, and 60 each coordinate heme. A helical transmembrane segment spans residues 286-306; sequence IQGLFLFLASVILAQIFLVLK.

It belongs to the cytochrome f family. As to quaternary structure, the 4 large subunits of the cytochrome b6-f complex are cytochrome b6, subunit IV (17 kDa polypeptide, petD), cytochrome f and the Rieske protein, while the 4 small subunits are PetG, PetL, PetM and PetN. The complex functions as a dimer. The cofactor is heme.

Its subcellular location is the plastid. It is found in the chloroplast thylakoid membrane. Its function is as follows. Component of the cytochrome b6-f complex, which mediates electron transfer between photosystem II (PSII) and photosystem I (PSI), cyclic electron flow around PSI, and state transitions. The polypeptide is Cytochrome f (Amborella trichopoda).